Consider the following 72-residue polypeptide: DNA-directed RNA polymerase subunit Rpo10 (72 aa).

Residues Cys7, Cys10, Cys53, and Cys54 each coordinate Zn(2+).

This sequence belongs to the archaeal Rpo10/eukaryotic RPB10 RNA polymerase subunit family. In terms of assembly, part of the RNA polymerase complex. It depends on Zn(2+) as a cofactor.

Its subcellular location is the cytoplasm. It carries out the reaction RNA(n) + a ribonucleoside 5'-triphosphate = RNA(n+1) + diphosphate. In terms of biological role, DNA-dependent RNA polymerase (RNAP) catalyzes the transcription of DNA into RNA using the four ribonucleoside triphosphates as substrates. The sequence is that of DNA-directed RNA polymerase subunit Rpo10 from Thermoplasma volcanium (strain ATCC 51530 / DSM 4299 / JCM 9571 / NBRC 15438 / GSS1).